The chain runs to 142 residues: HTH-type transcriptional regulator MntR (142 aa).

Positions 1–63 (MPTPSMEDYI…YEKYRGLILT (63 aa)) constitute an HTH dtxR-type domain. Mn(2+) is bound by residues Asp8, Glu11, His77, Glu99, Glu102, and His103.

The protein belongs to the DtxR/MntR family. Homodimer.

The protein resides in the cytoplasm. DNA binding is strongly activated by Mn(2+). Central regulator of manganese homeostasis. This Listeria welshimeri serovar 6b (strain ATCC 35897 / DSM 20650 / CCUG 15529 / CIP 8149 / NCTC 11857 / SLCC 5334 / V8) protein is HTH-type transcriptional regulator MntR.